We begin with the raw amino-acid sequence, 713 residues long: Cyclomaltodextrin glucanotransferase (713 aa).

Residues 1 to 27 (MKRFMKLTAVWTLWLSLTLGLLSPVHA) form the signal peptide. Residues 28–165 (APDTSVSNKQ…NIKVIIDFAP (138 aa)) are A1. Ca(2+) contacts are provided by Asp54, Asn56, Asn59, and Asn60. A disulfide bridge links Cys70 with Cys77. Ca(2+)-binding residues include Gly78 and Asp80. 127–128 (YW) serves as a coordination point for substrate. Asn166 contacts Ca(2+). A b region spans residues 166 to 229 (NHTSPASSDD…NLYDLADLNH (64 aa)). His167 is a binding site for substrate. Residue Ile217 participates in Ca(2+) binding. Position 220–223 (220–223 (NLYD)) interacts with substrate. Ca(2+) is bound at residue Asp226. The segment at 230–433 (NNSSVDVYLK…LRKSNPAIAY (204 aa)) is A2. Arg254 serves as a coordination point for substrate. Asp256 serves as the catalytic Nucleophile. 259 to 260 (KH) is a binding site for substrate. Ca(2+) is bound at residue His260. Residue Glu284 is the Proton donor of the active site. Substrate-binding residues include His354, Asp398, and Arg402. The interval 434–522 (GSTHERWINN…GTAVWQYTTD (89 aa)) is c. Residues 523-609 (ATTPIIGNVG…SNIYDNFEVL (87 aa)) form a d region. The region spanning 526 to 607 (PIIGNVGPMM…AASNIYDNFE (82 aa)) is the IPT/TIG domain. The CBM20 domain occupies 608-713 (VLTGDQVTVR…TATVNVNWQP (106 aa)). The e stretch occupies residues 610–713 (TGDQVTVRFV…TATVNVNWQP (104 aa)).

It belongs to the glycosyl hydrolase 13 family. Monomer. The cofactor is Ca(2+).

The protein resides in the secreted. It catalyses the reaction Cyclizes part of a (1-&gt;4)-alpha-D-glucan chain by formation of a (1-&gt;4)-alpha-D-glucosidic bond.. This chain is Cyclomaltodextrin glucanotransferase (cgt), found in Bacillus sp. (strain 1011).